The sequence spans 788 residues: Response regulator SSK1 (788 aa).

The Response regulatory domain maps to 534 to 691 (NVLIVEDNII…WLERKVKEWG (158 aa)). A 4-aspartylphosphate modification is found at D583.

Belongs to the SSK1 family.

It localises to the cytoplasm. Functionally, two-domain response regulator protein in the two-component signal transduction system of the HOG1 pathway. Controls high-osmolarity adaptation and fungicide sensitivity via its regulation of the phosphorylation of HOG1. The chain is Response regulator SSK1 from Cochliobolus heterostrophus (strain C5 / ATCC 48332 / race O) (Southern corn leaf blight fungus).